The sequence spans 453 residues: Probable exopolygalacturonase B (453 aa).

A signal peptide spans methionine 1–serine 16. N-linked (GlcNAc...) asparagine glycosylation is found at asparagine 185 and asparagine 225. Catalysis depends on aspartate 255, which acts as the Proton donor. A disulfide bridge connects residues cysteine 257 and cysteine 274. Residues asparagine 263 and asparagine 275 are each glycosylated (N-linked (GlcNAc...) asparagine). Histidine 278 is an active-site residue. 2 PbH1 repeats span residues isoleucine 295–alanine 316 and isoleucine 327–glutamine 348. Asparagine 302, asparagine 329, asparagine 354, and asparagine 366 each carry an N-linked (GlcNAc...) asparagine glycan. The PbH1 3 repeat unit spans residues proline 362–asparagine 405. Cysteine 392 and cysteine 398 form a disulfide bridge. Asparagine 436 carries an N-linked (GlcNAc...) asparagine glycan.

Belongs to the glycosyl hydrolase 28 family.

The protein localises to the secreted. The catalysed reaction is [(1-&gt;4)-alpha-D-galacturonosyl](n) + H2O = alpha-D-galacturonate + [(1-&gt;4)-alpha-D-galacturonosyl](n-1). Specific in hydrolyzing the terminal glycosidic bond of polygalacturonic acid and oligogalacturonates. This is Probable exopolygalacturonase B (pgxB) from Aspergillus fumigatus (strain ATCC MYA-4609 / CBS 101355 / FGSC A1100 / Af293) (Neosartorya fumigata).